The chain runs to 416 residues: Probable 26S proteasome regulatory subunit rpn-6.2 (416 aa).

The region spanning 217-386 (YKTSFSYFYE…DTVVVYPKAD (170 aa)) is the PCI domain.

This sequence belongs to the proteasome subunit S9 family. Component of the lid subcomplex of the 19S proteasome regulatory particle complex (also named PA700 complex). The 26S proteasome consists of a 20S proteasome core and two 19S regulatory subunits.

Functionally, component of the lid subcomplex of the 26S proteasome, a multiprotein complex involved in the ATP-dependent degradation of ubiquitinated proteins. In the complex, rpn-6.2 is required for proteasome assembly. This Caenorhabditis elegans protein is Probable 26S proteasome regulatory subunit rpn-6.2 (rpn-6.2).